A 187-amino-acid chain; its full sequence is Phosphatidylethanolamine-binding protein 1 (187 aa).

Ser13 bears the Phosphoserine mark. A Phosphothreonine modification is found at Thr42. A phosphoserine mark is found at Ser52, Ser98, and Ser153. The interaction with RAF1 stretch occupies residues 93–134 (KGNDISSGTVLSDYVGSGPPKGTGLHRYVWLVYEQSGPLKCD).

This sequence belongs to the phosphatidylethanolamine-binding protein family. As to quaternary structure, has a tendency to form dimers by disulfide cross-linking. Interacts with RAF1 and this interaction is enhanced if RAF1 is phosphorylated on residues 'Ser-338', 'Ser-339', 'Tyr-340' and 'Tyr-341'. Interacts with ALOX15; in response to IL13/interleukin-13, prevents the interaction of PEBP1 with RAF1 to activate the ERK signaling cascade.

The protein localises to the cytoplasm. In terms of biological role, binds ATP, opioids and phosphatidylethanolamine. Has lower affinity for phosphatidylinositol and phosphatidylcholine. Serine protease inhibitor which inhibits thrombin, neuropsin and chymotrypsin but not trypsin, tissue type plasminogen activator and elastase. Involved in the positive regulation of epithelial cell migration. Inhibits the kinase activity of RAF1 by inhibiting its activation and by dissociating the RAF1/MEK complex and acting as a competitive inhibitor of MEK phosphorylation. Functionally, HCNP may be involved in the function of the presynaptic cholinergic neurons of the central nervous system. HCNP increases the production of choline acetyltransferase but not acetylcholinesterase. Seems to be mediated by a specific receptor. This chain is Phosphatidylethanolamine-binding protein 1 (PEBP1), found in Canis lupus familiaris (Dog).